We begin with the raw amino-acid sequence, 426 residues long: Phosphoribosylamine--glycine ligase (426 aa).

The ATP-grasp domain occupies 113-320; the sequence is KSLMTEAKIP…LLELLYRAST (208 aa). Position 139–200 (139–200) interacts with ATP; that stretch reads LESKSIPIVI…EEFMEGQEAS (62 aa). Mg(2+)-binding residues include E290 and N292.

The protein belongs to the GARS family. The cofactor is Mg(2+). Requires Mn(2+) as cofactor.

It carries out the reaction 5-phospho-beta-D-ribosylamine + glycine + ATP = N(1)-(5-phospho-beta-D-ribosyl)glycinamide + ADP + phosphate + H(+). Its pathway is purine metabolism; IMP biosynthesis via de novo pathway; N(1)-(5-phospho-D-ribosyl)glycinamide from 5-phospho-alpha-D-ribose 1-diphosphate: step 2/2. This chain is Phosphoribosylamine--glycine ligase, found in Leptospira interrogans serogroup Icterohaemorrhagiae serovar Lai (strain 56601).